The primary structure comprises 350 residues: Phenylalanine--tRNA ligase alpha subunit (350 aa).

E260 contributes to the Mg(2+) binding site.

The protein belongs to the class-II aminoacyl-tRNA synthetase family. Phe-tRNA synthetase alpha subunit type 1 subfamily. In terms of assembly, tetramer of two alpha and two beta subunits. It depends on Mg(2+) as a cofactor.

The protein resides in the cytoplasm. It carries out the reaction tRNA(Phe) + L-phenylalanine + ATP = L-phenylalanyl-tRNA(Phe) + AMP + diphosphate + H(+). This chain is Phenylalanine--tRNA ligase alpha subunit, found in Mesoplasma florum (strain ATCC 33453 / NBRC 100688 / NCTC 11704 / L1) (Acholeplasma florum).